Consider the following 557-residue polypeptide: Formate--tetrahydrofolate ligase (557 aa).

Residue Thr-67–Thr-74 coordinates ATP.

The protein belongs to the formate--tetrahydrofolate ligase family.

It carries out the reaction (6S)-5,6,7,8-tetrahydrofolate + formate + ATP = (6R)-10-formyltetrahydrofolate + ADP + phosphate. Its pathway is one-carbon metabolism; tetrahydrofolate interconversion. This chain is Formate--tetrahydrofolate ligase, found in Cereibacter sphaeroides (strain ATCC 17025 / ATH 2.4.3) (Rhodobacter sphaeroides).